The following is a 138-amino-acid chain: MVVKAAGLVIYRKLAGKIEFLLLQASYPPHHWTPPKGHVDPGEDEWQAAIRETKEEANITKEQLTIHEDCHETLFYEAKGKPKSVKYWLAKLNNPDDVQLSHEHQNWKWCELEDAIKIADYAEMGSLLRKFSAFLAGF.

One can recognise a Nudix hydrolase domain in the interval 1-132; that stretch reads MVVKAAGLVI…EMGSLLRKFS (132 aa). A Nudix box motif is present at residues 37–58; the sequence is GHVDPGEDEWQAAIRETKEEAN.

This sequence belongs to the Nudix hydrolase family. In terms of assembly, monomer. Mg(2+) serves as cofactor. The cofactor is Co(2+). It depends on Mn(2+) as a cofactor. Zn(2+) is required as a cofactor. Requires Ca(2+) as cofactor.

The catalysed reaction is P(1),P(4)-bis(5'-adenosyl) tetraphosphate + H2O = AMP + ATP + 2 H(+). Its function is as follows. Asymmetrically hydrolyzes Ap4A to yield AMP and ATP. The sequence is that of Bis(5'-nucleosyl)-tetraphosphatase [asymmetrical] (ndx-4) from Caenorhabditis elegans.